A 470-amino-acid polypeptide reads, in one-letter code: Cannabinoid receptor type 1B (470 aa).

At 1–113 the chain is on the extracellular side; the sequence is MKLALHRIAG…CFMILTPAQQ (113 aa). Asparagine 78 and asparagine 86 each carry an N-linked (GlcNAc...) asparagine glycan. A helical membrane pass occupies residues 114–139; that stretch reads LVIVILAITLGTFTVLENFVVLCVIL. Topologically, residues 140-151 are cytoplasmic; the sequence is HSHTLRSRPSYH. A helical membrane pass occupies residues 152-172; sequence FIGSLAVADLIGSIIFVYSFL. Residues 173–184 lie on the Extracellular side of the membrane; the sequence is DFHVLHRKDSPS. The helical transmembrane segment at 185-209 threads the bilayer; it reads IFLFKLAGVIASFTASVGSLFLTAI. Over 210 to 229 the chain is Cytoplasmic; sequence DRYVSIHRPMAYKRIITKTK. A helical transmembrane segment spans residues 230–252; sequence AVIAFSVMWAISIEFSLLPLLGW. The Extracellular portion of the chain corresponds to 253–270; that stretch reads NCKRLHSVCSDIFPLIDE. The chain crosses the membrane as a helical span at residues 271–296; sequence KYLMFWIGMTTVLLLFIIYAYMFILW. Topologically, residues 297–341 are cytoplasmic; sequence KSHHHAVRMLSRSSQRSIIVYTSEGTKVQTVRPEQARMDLRLAKT. A helical membrane pass occupies residues 342–362; sequence LVLILVALIICWGPLLAIMVY. Residues 363–374 are Extracellular-facing; the sequence is DLFGRVNDFIKT. The helical transmembrane segment at 375-396 threads the bilayer; that stretch reads VFAFCSMLCLLNSTINPVIYAM. Over 397 to 470 the chain is Cytoplasmic; that stretch reads RSKDLRRAFV…VTASSPAEAV (74 aa). Cysteine 412 carries the S-palmitoyl cysteine lipid modification. Over residues 418 to 434 the composition is skewed to polar residues; the sequence is SLDSSAESDWNSRSVRS. The disordered stretch occupies residues 418–450; that stretch reads SLDSSAESDWNSRSVRSTGGRAGKDRSVGGKPQ.

It belongs to the G-protein coupled receptor 1 family. Palmitoylation at Cys-412 is important for recruitment at both plasma membrane and lipid rafts and association with G protein alpha subunits.

It localises to the cell membrane. The protein localises to the mitochondrion outer membrane. The protein resides in the cell projection. Its subcellular location is the axon. It is found in the presynapse. G-protein coupled receptor for cannabinoids. Mediates many cannabinoid-induced effects in the central nervous system (CNS), as well as in peripheral tissues. Regulates cellular respiration and energy production in response to cannabinoids. Signaling typically involves reduction in cyclic AMP. The sequence is that of Cannabinoid receptor type 1B (cnr1b) from Takifugu rubripes (Japanese pufferfish).